The chain runs to 63 residues: Large ribosomal subunit protein uL29 (63 aa).

This sequence belongs to the universal ribosomal protein uL29 family.

In Aliarcobacter butzleri (strain RM4018) (Arcobacter butzleri), this protein is Large ribosomal subunit protein uL29.